The chain runs to 168 residues: Type-2 ice-structuring protein (168 aa).

An N-terminal signal peptide occupies residues 1 to 17 (MLTVSLLVCAMMALTQA). The propeptide occupies 18-34 (DHDGVLKGTATEAGEVS). Disulfide bonds link Cys45–Cys56, Cys73–Cys163, Cys107–Cys138, Cys127–Cys149, and Cys139–Cys155. Positions 52–164 (HGQRCFYSEA…CPASHASICA (113 aa)) constitute a C-type lectin domain.

It is found in the secreted. In terms of biological role, has antifreeze activity to protect fish blood from freezing at subzero sea water temperatures. Binds to ice crystals and inhibits their growth. The thermal hysteresis (TH) activity, the ability to lower the blood freezing point, is approximately 0.45 degrees Celsius at 0.15 mM for this protein. The sequence is that of Type-2 ice-structuring protein from Brachyopsis segaliensis (Sea poacher).